Consider the following 143-residue polypeptide: 3-dehydroquinate dehydratase (143 aa).

Tyr21 acts as the Proton acceptor in catalysis. Residues Asn73, His79, and Asp86 each coordinate substrate. The active-site Proton donor is the His99. Substrate contacts are provided by residues 100–101 (IS) and Arg110.

This sequence belongs to the type-II 3-dehydroquinase family. Homododecamer.

The enzyme catalyses 3-dehydroquinate = 3-dehydroshikimate + H2O. It functions in the pathway metabolic intermediate biosynthesis; chorismate biosynthesis; chorismate from D-erythrose 4-phosphate and phosphoenolpyruvate: step 3/7. In terms of biological role, catalyzes a trans-dehydration via an enolate intermediate. This chain is 3-dehydroquinate dehydratase, found in Deinococcus radiodurans (strain ATCC 13939 / DSM 20539 / JCM 16871 / CCUG 27074 / LMG 4051 / NBRC 15346 / NCIMB 9279 / VKM B-1422 / R1).